A 565-amino-acid chain; its full sequence is Putative serine protease pcp-1 (565 aa).

Positions 1–17 are cleaved as a signal peptide; it reads MRWFLVLLLVALVSVEA. N-linked (GlcNAc...) asparagine glycosylation is found at Asn69, Asn107, and Asn126. Residue Ser177 is the Charge relay system of the active site. 6 N-linked (GlcNAc...) asparagine glycosylation sites follow: Asn240, Asn244, Asn257, Asn271, Asn319, and Asn347. Active-site charge relay system residues include Asp451 and His479.

Belongs to the peptidase S28 family.

In Caenorhabditis elegans, this protein is Putative serine protease pcp-1 (pcp-1).